We begin with the raw amino-acid sequence, 359 residues long: Cytoplasmic tRNA 2-thiolation protein 1 (359 aa).

Belongs to the TtcA family. CTU1/NCS6/ATPBD3 subfamily. As to quaternary structure, interacts with NCS2 and URM1. May act by forming a heterodimer with NCS2. Component of a large molecular weight complex of more than 250 kDa.

Its subcellular location is the cytoplasm. It localises to the mitochondrion. The protein operates within tRNA modification; 5-methoxycarbonylmethyl-2-thiouridine-tRNA biosynthesis. In terms of biological role, plays a central role in 2-thiolation of mcm(5)S(2)U at tRNA wobble positions of tRNA(Lys), tRNA(Glu) and tRNA(Gln). Directly binds tRNAs and probably acts by catalyzing adenylation of tRNAs, an intermediate required for 2-thiolation. It is unclear whether it acts as a sulfurtransferase that transfers sulfur from thiocarboxylated URM1 onto the uridine of tRNAs at wobble position. Prior mcm(5) tRNA modification by the elongator complex is required for 2-thiolation. May also be involved in protein urmylation. May also be involved in protein urmylation and in invasive and pseudohyphal growth. The polypeptide is Cytoplasmic tRNA 2-thiolation protein 1 (Saccharomyces cerevisiae (strain ATCC 204508 / S288c) (Baker's yeast)).